We begin with the raw amino-acid sequence, 73 residues long: uncharacterized protein (73 aa).

This is an uncharacterized protein from Human cytomegalovirus (strain AD169) (HHV-5).